Consider the following 200-residue polypeptide: uncharacterized protein (200 aa).

The tract at residues 149–200 is disordered; that stretch reads APDPGGSVATEEVLRSDDRDSHTQDSASEWPEGNDSVGSAAMRIDLSRIGGT. Over residues 160-171 the composition is skewed to basic and acidic residues; the sequence is EVLRSDDRDSHT.

To A.tumefaciens Ti plasmid conjugal transfer region I ORFR2 and ORFR3.

This is an uncharacterized protein from Sinorhizobium fredii (strain NBRC 101917 / NGR234).